A 220-amino-acid polypeptide reads, in one-letter code: Gene 32 protein (220 aa).

The tract at residues 184 to 205 is disordered; sequence NSAGGNGNAPGGGGAGAQVSAQ. A compositionally biased stretch (gly residues) spans 187–199; it reads GGNGNAPGGGGAG.

This Mycobacterium (Mycobacteriophage L5) protein is Gene 32 protein (32).